We begin with the raw amino-acid sequence, 158 residues long: CD-NTase/cGAS isopeptidase (158 aa).

Residue Glu-38 is the Proton donor/acceptor of the active site. Zn(2+) is bound by residues His-100, His-102, and Asp-113.

It belongs to the peptidase M67B family. Cap3 isopeptidase subfamily.

Its function is as follows. Metalloprotease priming reversal component of a CBASS antivirus system. CBASS (cyclic oligonucleotide-based antiphage signaling system) provides immunity against bacteriophages. The CD-NTase protein synthesizes cyclic nucleotides in response to infection; these serve as specific second messenger signals. The signals activate a diverse range of effectors, leading to bacterial cell death and thus abortive phage infection. A type II-A(GA) CBASS system. Reverses the primed state of CdnA, the CD-NTase. In terms of biological role, the capV-cdnA-cap2-cap3 operon provides about 10(4)-fold protection in strain BWHPSA011 against infection by phage PaMx41. In P.aeruginosa strain PAO1 it confers protection against phages PaMx41 and JBD18 but not JBD67 (JBD18 and JBD67 do not replicate in BWHPSA011 / Pa011). When acb2 in JBD67 is deleted this CBASS operon then protects against JDB67 also. This CBASS system limits prophage induction of lysogenized JBD67 as well as viral lytic replication. This Pseudomonas aeruginosa (strain BWHPSA011 / Pa011) protein is CD-NTase/cGAS isopeptidase.